We begin with the raw amino-acid sequence, 196 residues long: GTP cyclohydrolase-2 (196 aa).

49–53 (RIHSE) lines the GTP pocket. Zn(2+) is bound by residues C54, C65, and C67. Residues Q70, 92-94 (EGR), and T114 each bind GTP. Residue D126 is the Proton acceptor of the active site. The active-site Nucleophile is the R128. GTP contacts are provided by T149 and K154.

Belongs to the GTP cyclohydrolase II family. In terms of assembly, homodimer. Requires Zn(2+) as cofactor.

It catalyses the reaction GTP + 4 H2O = 2,5-diamino-6-hydroxy-4-(5-phosphoribosylamino)-pyrimidine + formate + 2 phosphate + 3 H(+). The protein operates within cofactor biosynthesis; riboflavin biosynthesis; 5-amino-6-(D-ribitylamino)uracil from GTP: step 1/4. Catalyzes the conversion of GTP to 2,5-diamino-6-ribosylamino-4(3H)-pyrimidinone 5'-phosphate (DARP), formate and pyrophosphate. This is GTP cyclohydrolase-2 from Hamiltonella defensa subsp. Acyrthosiphon pisum (strain 5AT).